Consider the following 375-residue polypeptide: Neutral protease 2 homolog MGYG_00813 (375 aa).

Residues 1 to 19 (MQVIVALAALSSLAAPALG) form the signal peptide. Positions 20–190 (FSIPRGVPVS…SGPLTRIGKR (171 aa)) are excised as a propeptide. Disulfide bonds link cysteine 198–cysteine 268 and cysteine 275–cysteine 293. Histidine 318 is a Zn(2+) binding site. The active site involves glutamate 319. Residues histidine 322 and aspartate 333 each coordinate Zn(2+).

The protein belongs to the peptidase M35 family. Zn(2+) serves as cofactor.

The protein localises to the secreted. The catalysed reaction is Preferential cleavage of bonds with hydrophobic residues in P1'. Also 3-Asn-|-Gln-4 and 8-Gly-|-Ser-9 bonds in insulin B chain.. Functionally, secreted metalloproteinase that allows assimilation of proteinaceous substrates. Shows high activities on basic nuclear substrates such as histone and protamine. May be involved in virulence. The sequence is that of Neutral protease 2 homolog MGYG_00813 from Arthroderma gypseum (strain ATCC MYA-4604 / CBS 118893) (Microsporum gypseum).